We begin with the raw amino-acid sequence, 184 residues long: Protein DP71L (184 aa).

Positions 1 to 15 are enriched in basic residues; the sequence is MSRRNKRSRRRRKKP. Positions 1–41 are disordered; that stretch reads MSRRNKRSRRRRKKPLNTIQPGPSKPSAQDEPIKSVSHHSS. Important for host CHOP inhibition stretches follow at residues 125–127 and 169–173; these read VYF and LSAVL.

It belongs to the asfivirus DP71L family. In terms of assembly, interacts (via C-terminus) with host PPP1CB.

In terms of biological role, interacts with the host phosphatase PP1 catalytic subunit (PPP1CB) and recruits it to dephosphorylate EIF2S1/eIF2alpha and therefore restores the host translation that has been shut-down by the host. Also inhibits the EIF2S1/eIF2alpha-ATF4-DDIT3/CHOP pathway. This Ornithodoros (relapsing fever ticks) protein is Protein DP71L.